Consider the following 467-residue polypeptide: Pancreatic lipase-related protein 3 (467 aa).

Residues 1–17 form the signal peptide; it reads MLGIWIVAFLFFGTSRG. Cys21 and Cys27 are oxidised to a cystine. N-linked (GlcNAc...) asparagine glycosylation occurs at Asn74. Cysteines 107 and 118 form a disulfide. Residue Asn125 is glycosylated (N-linked (GlcNAc...) asparagine). Catalysis depends on Ser168, which acts as the Nucleophile. The Charge relay system role is filled by Asp191. An intrachain disulfide couples Cys252 to Cys277. The Charge relay system role is filled by His279. 3 cysteine pairs are disulfide-bonded: Cys301–Cys312, Cys315–Cys320, and Cys451–Cys467. The region spanning 355 to 467 is the PLAT domain; sequence WRHKLSVKLS…PNILQNLKPC (113 aa).

The protein belongs to the AB hydrolase superfamily. Lipase family. Overexpressed in hepatocellular carcinoma.

It is found in the secreted. The enzyme catalyses a triacylglycerol + H2O = a diacylglycerol + a fatty acid + H(+). This Homo sapiens (Human) protein is Pancreatic lipase-related protein 3 (PNLIPRP3).